Reading from the N-terminus, the 252-residue chain is Serine/threonine phosphatase stp (252 aa).

Positions 1 to 18 (MHAEFRTDRGRIRHHNED) are enriched in basic and acidic residues. Positions 1 to 23 (MHAEFRTDRGRIRHHNEDNGGVF) are disordered. One can recognise a PPM-type phosphatase domain in the interval 2 to 242 (HAEFRTDRGR…DNITVLLVER (241 aa)). Residues Asp36, Gly37, Asp194, and Asp233 each coordinate Mn(2+).

The protein belongs to the PP2C family. It depends on Mn(2+) as a cofactor.

Its subcellular location is the cytoplasm. The protein localises to the membrane. The enzyme catalyses O-phospho-L-seryl-[protein] + H2O = L-seryl-[protein] + phosphate. It catalyses the reaction O-phospho-L-threonyl-[protein] + H2O = L-threonyl-[protein] + phosphate. With respect to regulation, activity not affected by inhibitors of phosphatases of the PPP family such as okadaic acid and cypermethrin, or by inhibitors of phosphatases of the PTP family such as sodium orthovanadate. Functionally, protein phosphatase that dephosphorylates EF-Tu. This is Serine/threonine phosphatase stp (stp) from Listeria monocytogenes serovar 1/2a (strain ATCC BAA-679 / EGD-e).